The primary structure comprises 470 residues: ATP synthase subunit beta (470 aa).

ATP is bound at residue G156–T163.

It belongs to the ATPase alpha/beta chains family. F-type ATPases have 2 components, CF(1) - the catalytic core - and CF(0) - the membrane proton channel. CF(1) has five subunits: alpha(3), beta(3), gamma(1), delta(1), epsilon(1). CF(0) has three main subunits: a(1), b(2) and c(9-12). The alpha and beta chains form an alternating ring which encloses part of the gamma chain. CF(1) is attached to CF(0) by a central stalk formed by the gamma and epsilon chains, while a peripheral stalk is formed by the delta and b chains.

It is found in the cell inner membrane. The enzyme catalyses ATP + H2O + 4 H(+)(in) = ADP + phosphate + 5 H(+)(out). In terms of biological role, produces ATP from ADP in the presence of a proton gradient across the membrane. The catalytic sites are hosted primarily by the beta subunits. The protein is ATP synthase subunit beta of Nitratidesulfovibrio vulgaris (strain ATCC 29579 / DSM 644 / CCUG 34227 / NCIMB 8303 / VKM B-1760 / Hildenborough) (Desulfovibrio vulgaris).